The chain runs to 296 residues: Aquaporin NIP1-1 (296 aa).

Methionine 1 is modified (N-acetylmethionine). Helical transmembrane passes span 57-77 (LIAE…SVVV) and 84-104 (VVTL…LIYS). Positions 114–116 (NPA) match the NPA 1 motif. 3 consecutive transmembrane segments (helical) span residues 136–156 (VISQ…LFGL), 180–200 (AFTM…GVAT), and 205–225 (IGEL…LIAA). The short motif at 233–235 (NPG) is the NPA 2 element. A helical membrane pass occupies residues 249 to 269 (GIWIYLVAPTLGAIAGAWVYN). Position 286 is a phosphoserine (serine 286).

Belongs to the MIP/aquaporin (TC 1.A.8) family. NIP (TC 1.A.8.12) subfamily. In terms of tissue distribution, expressed in roots.

The protein localises to the membrane. Functionally, water channel probably required to promote glycerol permeability and water transport across cell membranes. The chain is Aquaporin NIP1-1 (NIP1-1) from Arabidopsis thaliana (Mouse-ear cress).